The sequence spans 118 residues: Large ribosomal subunit protein bL20 (118 aa).

This sequence belongs to the bacterial ribosomal protein bL20 family.

Functionally, binds directly to 23S ribosomal RNA and is necessary for the in vitro assembly process of the 50S ribosomal subunit. It is not involved in the protein synthesizing functions of that subunit. The sequence is that of Large ribosomal subunit protein bL20 from Pelagibacter ubique (strain HTCC1062).